We begin with the raw amino-acid sequence, 627 residues long: Glycerophosphodiester phosphodiesterase domain-containing protein 4 (627 aa).

Topologically, residues 1–17 (MLLFLWIETSNEYFNFD) are cytoplasmic. A helical membrane pass occupies residues 18–38 (WVIFLGTGYWFYWSIFILSLA). Gly39 is a topological domain (extracellular). Residues 40–60 (ILTAYSSLLLLLGLLLLWEGI) traverse the membrane as a helical segment. Residues 61-69 (ELYLHLCHK) are Cytoplasmic-facing. Residues 70–90 (ILILLVILPCVILMFIICKFW) traverse the membrane as a helical segment. Topologically, residues 91–107 (KERWLVAGLSLQIFAPY) are extracellular. The helical transmembrane segment at 108–128 (VHLVSITVMVILFWPVAIYVA) threads the bilayer. Residues 129–162 (RLEREVRMRRYRMTHSEKKRLKKCNVIARLRGLQ) lie on the Cytoplasmic side of the membrane. A helical transmembrane segment spans residues 163-183 (VAVGLPFLLIFLSLCLMPLGI). Residues 184–468 (YSPCIQEKEN…PHFFMTPKFY (285 aa)) lie on the Extracellular side of the membrane. In terms of domain architecture, GP-PDE spans 198 to 457 (PTLFGHRGAP…DNIGLLSQLN (260 aa)). A divalent metal cation contacts are provided by Glu230, Asp232, and His245. 2 N-linked (GlcNAc...) asparagine glycosylation sites follow: Asn308 and Asn397. Residues 469 to 489 (MFIWLLVDIISVLFIVAIFCF) form a helical membrane-spanning segment. At 490–627 (HWRRETIKEK…TMPSVEVPYP (138 aa)) the chain is on the cytoplasmic side.

It belongs to the glycerophosphoryl diester phosphodiesterase family.

It localises to the membrane. This chain is Glycerophosphodiester phosphodiesterase domain-containing protein 4 (GDPD4), found in Macaca fascicularis (Crab-eating macaque).